A 256-amino-acid polypeptide reads, in one-letter code: Chlorophyll a-b binding protein CP24 10A, chloroplastic (256 aa).

2 helical membrane passes run 106–126 and 134–154; these read WAMA…IPWF and AIAP…MGWV.

The protein belongs to the ELIP/psbS family.

The protein resides in the plastid. It localises to the chloroplast thylakoid membrane. The protein is Chlorophyll a-b binding protein CP24 10A, chloroplastic (CAP10A) of Solanum lycopersicum (Tomato).